A 95-amino-acid chain; its full sequence is Aspartyl/glutamyl-tRNA(Asn/Gln) amidotransferase subunit C (95 aa).

The protein belongs to the GatC family. In terms of assembly, heterotrimer of A, B and C subunits.

The enzyme catalyses L-glutamyl-tRNA(Gln) + L-glutamine + ATP + H2O = L-glutaminyl-tRNA(Gln) + L-glutamate + ADP + phosphate + H(+). The catalysed reaction is L-aspartyl-tRNA(Asn) + L-glutamine + ATP + H2O = L-asparaginyl-tRNA(Asn) + L-glutamate + ADP + phosphate + 2 H(+). Allows the formation of correctly charged Asn-tRNA(Asn) or Gln-tRNA(Gln) through the transamidation of misacylated Asp-tRNA(Asn) or Glu-tRNA(Gln) in organisms which lack either or both of asparaginyl-tRNA or glutaminyl-tRNA synthetases. The reaction takes place in the presence of glutamine and ATP through an activated phospho-Asp-tRNA(Asn) or phospho-Glu-tRNA(Gln). The chain is Aspartyl/glutamyl-tRNA(Asn/Gln) amidotransferase subunit C from Caulobacter sp. (strain K31).